Consider the following 231-residue polypeptide: Ribose-5-phosphate isomerase A (231 aa).

Substrate contacts are provided by residues 40-43 (TGST), 93-96 (DGAD), and 106-109 (KGGG). The Proton acceptor role is filled by glutamate 115. Lysine 133 is a substrate binding site.

Belongs to the ribose 5-phosphate isomerase family. As to quaternary structure, homodimer.

The enzyme catalyses aldehydo-D-ribose 5-phosphate = D-ribulose 5-phosphate. It participates in carbohydrate degradation; pentose phosphate pathway; D-ribose 5-phosphate from D-ribulose 5-phosphate (non-oxidative stage): step 1/1. In terms of biological role, catalyzes the reversible conversion of ribose-5-phosphate to ribulose 5-phosphate. This chain is Ribose-5-phosphate isomerase A, found in Escherichia coli O1:K1 / APEC.